We begin with the raw amino-acid sequence, 87 residues long: Phosphoribosyl-ATP pyrophosphatase (87 aa).

Belongs to the PRA-PH family.

The protein resides in the cytoplasm. It carries out the reaction 1-(5-phospho-beta-D-ribosyl)-ATP + H2O = 1-(5-phospho-beta-D-ribosyl)-5'-AMP + diphosphate + H(+). The protein operates within amino-acid biosynthesis; L-histidine biosynthesis; L-histidine from 5-phospho-alpha-D-ribose 1-diphosphate: step 2/9. This is Phosphoribosyl-ATP pyrophosphatase from Kocuria rhizophila (strain ATCC 9341 / DSM 348 / NBRC 103217 / DC2201).